A 268-amino-acid polypeptide reads, in one-letter code: Ribosomal RNA small subunit methyltransferase A (268 aa).

S-adenosyl-L-methionine contacts are provided by Asn12, Leu14, Gly38, Glu59, Asp82, and Asn107.

Belongs to the class I-like SAM-binding methyltransferase superfamily. rRNA adenine N(6)-methyltransferase family. RsmA subfamily.

It is found in the cytoplasm. The catalysed reaction is adenosine(1518)/adenosine(1519) in 16S rRNA + 4 S-adenosyl-L-methionine = N(6)-dimethyladenosine(1518)/N(6)-dimethyladenosine(1519) in 16S rRNA + 4 S-adenosyl-L-homocysteine + 4 H(+). Specifically dimethylates two adjacent adenosines (A1518 and A1519) in the loop of a conserved hairpin near the 3'-end of 16S rRNA in the 30S particle. May play a critical role in biogenesis of 30S subunits. In Onion yellows phytoplasma (strain OY-M), this protein is Ribosomal RNA small subunit methyltransferase A.